Here is a 235-residue protein sequence, read N- to C-terminus: Thiamine import ATP-binding protein ThiQ (235 aa).

The ABC transporter domain maps to 2–230 (LKLIDITWLY…QASASALLGI (229 aa)). 32-39 (GPSGAGKS) provides a ligand contact to ATP.

The protein belongs to the ABC transporter superfamily. Thiamine importer (TC 3.A.1.19.1) family. The complex is composed of two ATP-binding proteins (ThiQ), two transmembrane proteins (ThiP) and a solute-binding protein (ThiB).

The protein resides in the cell inner membrane. It catalyses the reaction thiamine(out) + ATP + H2O = thiamine(in) + ADP + phosphate + H(+). Part of the ABC transporter complex ThiBPQ involved in thiamine import. Responsible for energy coupling to the transport system. The protein is Thiamine import ATP-binding protein ThiQ of Salmonella choleraesuis (strain SC-B67).